The primary structure comprises 150 residues: Ribonuclease P protein subunit p21 (150 aa).

The residue at position 2 (Ala-2) is an N-acetylalanine. Residues Cys-62, Cys-65, Cys-92, and Cys-95 each coordinate Zn(2+). Positions Gln-121 to Glu-150 are disordered. Positions Asn-140–Glu-150 are enriched in polar residues.

It belongs to the eukaryotic/archaeal RNase P protein component 4 family. In terms of assembly, RNase P consists of a catalytic RNA moiety and about 10 protein subunits; POP1, POP4, POP5, POP7, RPP14, RPP21, RPP25, RPP30, RPP38 and RPP40. Within the RNase P complex, POP1, POP7 and RPP25 form the 'finger' subcomplex, POP5, RPP14, RPP40 and homodimeric RPP30 form the 'palm' subcomplex, and RPP21, POP4 and RPP38 form the 'wrist' subcomplex. All subunits of the RNase P complex interact with the catalytic RNA.

It is found in the nucleus. The protein localises to the nucleolus. Component of ribonuclease P, a ribonucleoprotein complex that generates mature tRNA molecules by cleaving their 5'-ends. This is Ribonuclease P protein subunit p21 (Rpp21) from Mus musculus (Mouse).